The chain runs to 47 residues: uncharacterized protein (47 aa).

The interval 19-47 (EKVLKNQNPDRLSHMTDKNAQPKSKEKEE) is disordered.

This is an uncharacterized protein from Bacillus subtilis (strain 168).